A 255-amino-acid chain; its full sequence is tRNA (guanine-N(7)-)-methyltransferase (255 aa).

A disordered region spans residues 1–35; it reads MTRTNDASGGGKLPRKRFYRARAHSNPLSDSHFPV. Over residues 13 to 23 the composition is skewed to basic residues; the sequence is LPRKRFYRARA. Residues Gly-75, 98–99, 131–132, and Leu-151 each bind S-adenosyl-L-methionine; these read EL and NS. Asp-154 is an active-site residue. Residue 229-231 participates in S-adenosyl-L-methionine binding; that stretch reads TEE.

The protein belongs to the class I-like SAM-binding methyltransferase superfamily. TrmB family.

The protein localises to the nucleus. The catalysed reaction is guanosine(46) in tRNA + S-adenosyl-L-methionine = N(7)-methylguanosine(46) in tRNA + S-adenosyl-L-homocysteine. The protein operates within tRNA modification; N(7)-methylguanine-tRNA biosynthesis. In terms of biological role, catalyzes the formation of N(7)-methylguanine at position 46 (m7G46) in tRNA. This chain is tRNA (guanine-N(7)-)-methyltransferase, found in Zea mays (Maize).